The sequence spans 313 residues: Cytochrome c biogenesis protein CcsA (313 aa).

8 helical membrane-spanning segments follow: residues 9–29 (ILTH…LITL), 44–64 (GIIV…ISSG), 71–91 (LYES…IPYF), 101–121 (IIGP…LTEI), 143–163 (MILG…LLVI), 217–237 (VISL…VWAN), 244–264 (WNWD…AIYL), and 278–298 (AIVA…VNLL).

The protein belongs to the CcmF/CycK/Ccl1/NrfE/CcsA family. May interact with Ccs1.

The protein localises to the plastid. It is found in the chloroplast thylakoid membrane. In terms of biological role, required during biogenesis of c-type cytochromes (cytochrome c6 and cytochrome f) at the step of heme attachment. This chain is Cytochrome c biogenesis protein CcsA, found in Nicotiana tomentosiformis (Tobacco).